The chain runs to 241 residues: CRISPR-associated endoribonuclease Cas6 2 (241 aa).

Residue Tyr-28 is the Proton acceptor of the active site. The Proton donor role is filled by His-40.

Belongs to the CRISPR-associated protein Cas6/Cse3/CasE family.

In terms of biological role, CRISPR (clustered regularly interspaced short palindromic repeat) is an adaptive immune system that provides protection against mobile genetic elements (viruses, transposable elements and conjugative plasmids). CRISPR clusters contain sequences complementary to antecedent mobile elements and target invading nucleic acids. CRISPR clusters are transcribed and processed into CRISPR RNA (crRNA). This protein processes pre-crRNA into individual crRNA units. The sequence is that of CRISPR-associated endoribonuclease Cas6 2 (cas6b) from Methanocaldococcus jannaschii (strain ATCC 43067 / DSM 2661 / JAL-1 / JCM 10045 / NBRC 100440) (Methanococcus jannaschii).